The chain runs to 414 residues: Esterase FrsA (414 aa).

Belongs to the FrsA family.

The catalysed reaction is a carboxylic ester + H2O = an alcohol + a carboxylate + H(+). In terms of biological role, catalyzes the hydrolysis of esters. This is Esterase FrsA from Klebsiella pneumoniae subsp. pneumoniae (strain ATCC 700721 / MGH 78578).